A 75-amino-acid polypeptide reads, in one-letter code: Large ribosomal subunit protein bL31 (75 aa).

It belongs to the bacterial ribosomal protein bL31 family. Type A subfamily. In terms of assembly, part of the 50S ribosomal subunit.

Functionally, binds the 23S rRNA. This chain is Large ribosomal subunit protein bL31, found in Chlorobium phaeobacteroides (strain BS1).